A 247-amino-acid chain; its full sequence is Protein-L-isoaspartate O-methyltransferase 2 (247 aa).

Serine 97 is a catalytic residue.

Belongs to the methyltransferase superfamily. L-isoaspartyl/D-aspartyl protein methyltransferase family.

It is found in the cytoplasm. The enzyme catalyses [protein]-L-isoaspartate + S-adenosyl-L-methionine = [protein]-L-isoaspartate alpha-methyl ester + S-adenosyl-L-homocysteine. In terms of biological role, catalyzes the methyl esterification of L-isoaspartyl residues in peptides and proteins that result from spontaneous decomposition of normal L-aspartyl and L-asparaginyl residues. It plays a role in the repair and/or degradation of damaged proteins. The chain is Protein-L-isoaspartate O-methyltransferase 2 from Syntrophobacter fumaroxidans (strain DSM 10017 / MPOB).